Here is a 298-residue protein sequence, read N- to C-terminus: ATP synthase gamma chain (298 aa).

This sequence belongs to the ATPase gamma chain family. As to quaternary structure, F-type ATPases have 2 components, CF(1) - the catalytic core - and CF(0) - the membrane proton channel. CF(1) has five subunits: alpha(3), beta(3), gamma(1), delta(1), epsilon(1). CF(0) has three main subunits: a, b and c.

The protein resides in the cell inner membrane. Functionally, produces ATP from ADP in the presence of a proton gradient across the membrane. The gamma chain is believed to be important in regulating ATPase activity and the flow of protons through the CF(0) complex. This Francisella tularensis subsp. mediasiatica (strain FSC147) protein is ATP synthase gamma chain.